The primary structure comprises 393 residues: MIHRGLWLHNLVQSYRVGSSSSSSTLFKLVYRYNSSTSLAKSSLKQSCELSCKSNTEPSNMDWDKLGFKLMPTDYVYSMKCSNEGNFEQGRLELHGNIELSPAAAVLNYGQGIFEGTKAYRKEDGSLLLFRPDQNGVRMRIGAERMCMPSPSVDQFVDAVKQTAIANRRWVPPSGKGSLYIRPLLMGTGAVLGVAPAPQYTFLAYASPVGNYFKEGLAPLRLYVEDEFDRASPGGTGFVKTIGNYSRCLAALSRAKNKGFSDVLFLDSVHKKYVEELSSCNIFIVQGNQISTPAANGTILSGVTRSSIIEIARDHGFKVEERKIAVDELMEAEEVFCTGTAVGVASVGSITYHNKRVEFKTGSQSVSQKFYSTLIGIQTGVVEDKKGWIVEID.

A mitochondrion-targeting transit peptide spans 1–34 (MIHRGLWLHNLVQSYRVGSSSSSSTLFKLVYRYN). Arg138 is a binding site for pyridoxal 5'-phosphate. Catalysis depends on Lys240, which acts as the Proton acceptor. An N6-(pyridoxal phosphate)lysine modification is found at Lys240. Residue Glu276 coordinates pyridoxal 5'-phosphate.

It belongs to the class-IV pyridoxal-phosphate-dependent aminotransferase family. Pyridoxal 5'-phosphate serves as cofactor. In terms of tissue distribution, expressed specifically in lupulin glands.

Its subcellular location is the mitochondrion. It carries out the reaction L-isoleucine + 2-oxoglutarate = (S)-3-methyl-2-oxopentanoate + L-glutamate. It catalyses the reaction L-leucine + 2-oxoglutarate = 4-methyl-2-oxopentanoate + L-glutamate. The enzyme catalyses L-valine + 2-oxoglutarate = 3-methyl-2-oxobutanoate + L-glutamate. The protein operates within amino-acid biosynthesis; L-isoleucine biosynthesis; L-isoleucine from 2-oxobutanoate: step 4/4. It functions in the pathway amino-acid biosynthesis; L-leucine biosynthesis; L-leucine from 3-methyl-2-oxobutanoate: step 4/4. Its pathway is amino-acid biosynthesis; L-valine biosynthesis; L-valine from pyruvate: step 4/4. Functionally, converts 2-oxo acids to branched-chain amino acids (BCAA). Shows no kinetic preferences corresponding to anabolic or catabolic functions, but likely involved in BCAA catabolism. The protein is Branched-chain amino acid aminotransferase 1, mitochondrial of Humulus lupulus (European hop).